The chain runs to 411 residues: Aspartokinase (411 aa).

ATP is bound at residue 7–10 (KFGG). 25–30 (RVIEEK) provides a ligand contact to substrate. Serine 41 serves as a coordination point for ATP. Residues 47–49 (TDE), glutamate 74, 125–126 (LN), 150–153 (RGGS), and serine 153 contribute to the substrate site. Residues 173–174 (TD) and 179–184 (FTTDPR) contribute to the ATP site. ACT domains are found at residues 264 to 338 (VTVF…SETG) and 344 to 411 (IVGS…KSER). Residues 289 to 291 (NVD), glutamine 295, 355 to 356 (VA), 369 to 370 (QV), and 376 to 377 (SE) contribute to the substrate site.

It belongs to the aspartokinase family. As to quaternary structure, tetramer consisting of 2 isoforms Alpha (catalytic and regulation) and of a homodimer of 2 isoforms Beta (regulation).

It catalyses the reaction L-aspartate + ATP = 4-phospho-L-aspartate + ADP. The protein operates within amino-acid biosynthesis; L-lysine biosynthesis via DAP pathway; (S)-tetrahydrodipicolinate from L-aspartate: step 1/4. It functions in the pathway amino-acid biosynthesis; L-methionine biosynthesis via de novo pathway; L-homoserine from L-aspartate: step 1/3. Its pathway is amino-acid biosynthesis; L-threonine biosynthesis; L-threonine from L-aspartate: step 1/5. Lysine-sensitive. In terms of biological role, catalyzes the phosphorylation of the beta-carboxyl group of aspartic acid with ATP to yield 4-phospho-L-aspartate, which is involved in the branched biosynthetic pathway leading to the biosynthesis of amino acids threonine, isoleucine and methionine. This Bacillus sp. (strain MGA3) protein is Aspartokinase (lysC).